We begin with the raw amino-acid sequence, 451 residues long: Protein NINJA homolog 1 (451 aa).

3 disordered regions span residues 1 to 223 (MDDE…QGNP), 321 to 346 (ISQADDGKKTQEAGASSSALVEDDKK), and 427 to 451 (DAPGQENSATLPAFPVGNQAASAQN). Basic and acidic residues predominate over residues 23–35 (KARDAPLEPKAEP). Polar residues-rich tracts occupy residues 38 to 49 (EESSSKGVSQTP), 86 to 103 (PGSSSVPVADGSNEQKPV), and 143 to 153 (ISISTDDGSTG). Positions 154-163 (ENEDVAESEA) are enriched in acidic residues. Over residues 207–216 (SFSGSESSSG) the composition is skewed to low complexity.

The protein belongs to the Ninja family. In terms of assembly, interacts with TIFY10C/JAZ8. Interacts with TIFY11A/JAZ9.

The protein localises to the nucleus. The chain is Protein NINJA homolog 1 from Oryza sativa subsp. japonica (Rice).